Reading from the N-terminus, the 34-residue chain is Photosystem I reaction center subunit XII (34 aa).

A helical transmembrane segment spans residues 5-25 (ISSPEIFIALVVAAHAAILAL).

It belongs to the PsaM family.

The protein resides in the cellular thylakoid membrane. This chain is Photosystem I reaction center subunit XII, found in Synechococcus sp. (strain CC9902).